A 539-amino-acid polypeptide reads, in one-letter code: MMMTKQKNTLADRLNIGGEVRELRLGATFNPKNSSTAFHTIKYDFKPASVDPNRMAAVDVGSNNQVTVTVPNLENSGVPHTVYKGNQRKYAKECLMIYDKETGAITLEKLNHNIQVKKTRSEMTHHKPSFLPATNINHNNIPMSTNGSGPGPGPGPGSGPSPPLSGSASGSGQKLENSTMRISSKTKVSTGSRRNNIIDFKPRNSPMQQSSPSRPVASHRSPQSAPAWNANNAQQTLPSIPMIMDDDDFGLGAALHNGTGGGQANISGSSTGSSTGQPDYGGGGSSSSSTMHRQRQVPQHGQHGKRQQMHQNHQQHPSPPMHQQQQQQQQQQHYGRGINNGGGSNNYAQQQQPQQHHQQQEQQRPSSSSTYSHHSNNMPMDLDFPRENDLTSQTMAQAGAAIEEQIGGVLSASSSSSESDSSDSDSGSESDDSTDDESRPMQQQQLPNLGLGSISPSYNNHQQLQQQPPQQQQQQQQQQQYNHHMQQQHQPQQQHHHHHQQQQQQQQQSDMYTSNRGFPNDLLQNDLQLSSNSSDDDDD.

Positions 119–539 (TRSEMTHHKP…SSNSSDDDDD (421 aa)) are disordered. Residues 132–146 (PATNINHNNIPMSTN) show a composition bias toward polar residues. A compositionally biased stretch (pro residues) spans 151-163 (GPGPGPGSGPSPP). A compositionally biased stretch (polar residues) spans 174 to 195 (KLENSTMRISSKTKVSTGSRRN). A Phosphoserine modification is found at S205. Positions 220–238 (RSPQSAPAWNANNAQQTLP) are enriched in polar residues. Low complexity-rich tracts occupy residues 267–278 (SGSSTGSSTGQP), 309–337 (MHQNHQQHPSPPMHQQQQQQQQQQHYGRG), and 345–375 (NNYAQQQQPQQHHQQQEQQRPSSSSTYSHHS). The segment covering 420 to 435 (DSSDSDSGSESDDSTD) has biased composition (acidic residues). 2 stretches are compositionally biased toward low complexity: residues 461 to 493 (HQQLQQQPPQQQQQQQQQQQYNHHMQQQHQPQQ) and 520 to 533 (NDLLQNDLQLSSNS).

Belongs to the EAF family.

It localises to the nucleus. In terms of biological role, promotes transcriptional elongation by Su(Tpl)/ELL. Essential for development. This Drosophila willistoni (Fruit fly) protein is Ell-associated factor Eaf.